A 155-amino-acid polypeptide reads, in one-letter code: Ribosome maturation factor RimP (155 aa).

It belongs to the RimP family.

Its subcellular location is the cytoplasm. Required for maturation of 30S ribosomal subunits. The polypeptide is Ribosome maturation factor RimP (Listeria monocytogenes serotype 4b (strain CLIP80459)).